Consider the following 254-residue polypeptide: MINIGIHGASGKMGQMIINCLKDSKDAKLTALYTIEPLGSVPEGVIVTDDLNELFANCDVVIDFTIKEGALNLINYARTNPKPLVIGTTGLGDDGTNLLNLAANAMPILYATNMSLGVAVLNRLASLAAKTLAEFDIEIVEQHHRHKKDAPSGTALTLAQHAANARGLNLKDVIVTGRDGLVGARSKDEIAVLAVRGGDVVGRHTIGFYNEGEFIEINHTATSRATFAKGAIKAAVWLSSQKNGLYSIYDCLGL.

NAD(+)-binding positions include 8–13, 87–89, and 111–114; these read GASGKM, GTT, and ATNM. Residue histidine 143 is the Proton donor/acceptor of the active site. Histidine 144 contributes to the (S)-2,3,4,5-tetrahydrodipicolinate binding site. Lysine 147 acts as the Proton donor in catalysis. Residue 153–154 coordinates (S)-2,3,4,5-tetrahydrodipicolinate; the sequence is GT.

Belongs to the DapB family.

The protein resides in the cytoplasm. It carries out the reaction (S)-2,3,4,5-tetrahydrodipicolinate + NAD(+) + H2O = (2S,4S)-4-hydroxy-2,3,4,5-tetrahydrodipicolinate + NADH + H(+). It catalyses the reaction (S)-2,3,4,5-tetrahydrodipicolinate + NADP(+) + H2O = (2S,4S)-4-hydroxy-2,3,4,5-tetrahydrodipicolinate + NADPH + H(+). The protein operates within amino-acid biosynthesis; L-lysine biosynthesis via DAP pathway; (S)-tetrahydrodipicolinate from L-aspartate: step 4/4. Its function is as follows. Catalyzes the conversion of 4-hydroxy-tetrahydrodipicolinate (HTPA) to tetrahydrodipicolinate. The sequence is that of 4-hydroxy-tetrahydrodipicolinate reductase from Campylobacter curvus (strain 525.92).